The sequence spans 564 residues: Beta-catenin-like protein 1 homolog (564 aa).

Residues 1–56 (MDVDSIFKNTEETNKKRNPEEADSLEPASSRRRLAEENSDEENEEFDEEGGRFFGS) are disordered. The span at 9–20 (NTEETNKKRNPE) shows a compositional bias: basic and acidic residues. The segment covering 37–48 (ENSDEENEEFDE) has biased composition (acidic residues). Ser39 carries the phosphoserine modification. HEAT repeat units follow at residues 83–133 (PTEL…VLSE) and 138–177 (IPIF…DEDV). ARM repeat units lie at residues 179-229 (PDAL…LLSV), 230-276 (DNSI…LANS), 277-326 (KEAK…LVQE), 328-366 (KGKS…LLFG), and 367-411 (PLST…LFRS). Positions 465–528 (EKSTKWFLQQ…DALKNYHENL (64 aa)) form a coiled coil.

It localises to the nucleus. Functionally, probable spliceosomal component involved in the activation of pre-mRNA splicing. In Schizosaccharomyces pombe (strain 972 / ATCC 24843) (Fission yeast), this protein is Beta-catenin-like protein 1 homolog (ctnnbl1).